The sequence spans 254 residues: N(G),N(G)-dimethylarginine dimethylaminohydrolase (254 aa).

Substrate contacts are provided by residues leucine 18, aspartate 60, 65–66, arginine 85, and arginine 132; that span reads ED. Histidine 162 serves as the catalytic Proton donor. Histidine 162 serves as a coordination point for Zn(2+). Position 243 (isoleucine 243) interacts with substrate. Position 249 (cysteine 249) interacts with Zn(2+). Catalysis depends on cysteine 249, which acts as the Nucleophile.

The protein belongs to the DDAH family. In terms of assembly, homodimer.

The catalysed reaction is N(omega),N(omega)-dimethyl-L-arginine + H2O = dimethylamine + L-citrulline. The enzyme catalyses N(omega)-methyl-L-arginine + H2O = L-citrulline + methylamine. With respect to regulation, inhibited by zinc ions. Competitively inhibited by lysine. Hydrolyzes N(G),N(G)-dimethyl-L-arginine (ADMA) and N(G)-monomethyl-L-arginine (MMA). The sequence is that of N(G),N(G)-dimethylarginine dimethylaminohydrolase from Pseudomonas aeruginosa (strain ATCC 15692 / DSM 22644 / CIP 104116 / JCM 14847 / LMG 12228 / 1C / PRS 101 / PAO1).